The following is a 151-amino-acid chain: Putative pre-16S rRNA nuclease (151 aa).

The protein belongs to the YqgF nuclease family.

The protein resides in the cytoplasm. In terms of biological role, could be a nuclease involved in processing of the 5'-end of pre-16S rRNA. The chain is Putative pre-16S rRNA nuclease from Pelagibacter ubique (strain HTCC1062).